The following is a 416-amino-acid chain: Subtilisin-like protease 12 (416 aa).

Residues 1-19 (MSILKMMLIYFAIFWVVNA) form the signal peptide. Positions 20–116 (AQLLDIDSQG…VEPNKEMQVA (97 aa)) are excised as a propeptide. The 81-residue stretch at 35–115 (YIVVMKDRVS…FVEPNKEMQV (81 aa)) folds into the Inhibitor I9 domain. Asn-123, Asn-136, and Asn-150 each carry an N-linked (GlcNAc...) asparagine glycan. One can recognise a Peptidase S8 domain in the interval 125-416 (TWGLSRISHK…NKLLYNGSGA (292 aa)). Active-site charge relay system residues include Asp-157 and His-188. N-linked (GlcNAc...) asparagine glycosylation is found at Asn-249, Asn-305, Asn-334, and Asn-353. Ser-362 acts as the Charge relay system in catalysis. 2 N-linked (GlcNAc...) asparagine glycosylation sites follow: Asn-404 and Asn-412.

The protein belongs to the peptidase S8 family.

Its subcellular location is the secreted. In terms of biological role, secreted subtilisin-like serine protease with keratinolytic activity that contributes to pathogenicity. In Arthroderma benhamiae (strain ATCC MYA-4681 / CBS 112371) (Trichophyton mentagrophytes), this protein is Subtilisin-like protease 12 (SUB12).